The following is a 150-amino-acid chain: Cilia- and flagella-associated protein 68 (150 aa).

Mn regions lie at residues 99–110 (TTYDTSYNNKMP) and 140–150 (KSTYMNSYSKP).

It belongs to the CFAP68 family. As to quaternary structure, microtubule inner protein component of sperm flagellar doublet microtubules.

It is found in the cytoplasm. It localises to the cytoskeleton. The protein localises to the cilium axoneme. Its subcellular location is the flagellum axoneme. The protein resides in the nucleus. It is found in the cell projection. It localises to the cilium. Functionally, microtubule inner protein (MIP) part of the dynein-decorated doublet microtubules (DMTs) in cilia axoneme, which is required for motile cilia beating. The chain is Cilia- and flagella-associated protein 68 from Homo sapiens (Human).